Here is a 320-residue protein sequence, read N- to C-terminus: Ferrochelatase (320 aa).

2 residues coordinate Fe cation: His194 and Glu272.

Belongs to the ferrochelatase family.

It localises to the cytoplasm. The catalysed reaction is heme b + 2 H(+) = protoporphyrin IX + Fe(2+). Its pathway is porphyrin-containing compound metabolism; protoheme biosynthesis; protoheme from protoporphyrin-IX: step 1/1. In terms of biological role, catalyzes the ferrous insertion into protoporphyrin IX. This Desulfotalea psychrophila (strain LSv54 / DSM 12343) protein is Ferrochelatase.